We begin with the raw amino-acid sequence, 140 residues long: Acyl-coenzyme A thioesterase 13 (140 aa).

The residue at position 1 (Met1) is an N-acetylmethionine. N6-acetyllysine occurs at positions 27, 37, and 43. CoA is bound at residue Glu46. Substrate contacts are provided by Asn50 and Gly81. CoA-binding positions include Ser83, 90-95, and 108-113; these read YMSPAK and KQGKTL. N6-acetyllysine is present on residues Lys108 and Lys127. His137 is a CoA binding site.

It belongs to the thioesterase PaaI family. Homotetramer. Interacts with PCTP. In terms of tissue distribution, highly expressed in the kidney and moderately in the heart, liver, brain, small and large intestine. Also expressed in brown adipose tissue.

The protein localises to the cytoplasm. It is found in the cytosol. It localises to the mitochondrion. Its subcellular location is the nucleus. The protein resides in the cytoskeleton. The protein localises to the spindle. It catalyses the reaction a fatty acyl-CoA + H2O = a fatty acid + CoA + H(+). The catalysed reaction is decanoyl-CoA + H2O = decanoate + CoA + H(+). It carries out the reaction octanoyl-CoA + H2O = octanoate + CoA + H(+). The enzyme catalyses butanoyl-CoA + H2O = butanoate + CoA + H(+). It catalyses the reaction hexanoyl-CoA + H2O = hexanoate + CoA + H(+). The catalysed reaction is tetradecanoyl-CoA + H2O = tetradecanoate + CoA + H(+). It carries out the reaction hexadecanoyl-CoA + H2O = hexadecanoate + CoA + H(+). The enzyme catalyses dodecanoyl-CoA + H2O = dodecanoate + CoA + H(+). It catalyses the reaction (9Z)-octadecenoyl-CoA + H2O = (9Z)-octadecenoate + CoA + H(+). Catalyzes the hydrolysis of acyl-CoAs into free fatty acids and coenzyme A (CoASH), regulating their respective intracellular levels. Has acyl-CoA thioesterase activity towards medium (C12) and long-chain (C18) fatty acyl-CoA substrates. Can also hydrolyze 3-hydroxyphenylacetyl-CoA and 3,4-dihydroxyphenylacetyl-CoA (in vitro). May play a role in controlling adaptive thermogenesis. The protein is Acyl-coenzyme A thioesterase 13 of Mus musculus (Mouse).